The sequence spans 548 residues: Chaperonin GroEL (548 aa).

ATP contacts are provided by residues 30 to 33 (TLGP), lysine 51, 87 to 91 (DGTTT), glycine 415, 479 to 481 (NAA), and aspartate 495.

Belongs to the chaperonin (HSP60) family. As to quaternary structure, forms a cylinder of 14 subunits composed of two heptameric rings stacked back-to-back. Interacts with the co-chaperonin GroES.

It is found in the cytoplasm. It carries out the reaction ATP + H2O + a folded polypeptide = ADP + phosphate + an unfolded polypeptide.. Functionally, together with its co-chaperonin GroES, plays an essential role in assisting protein folding. The GroEL-GroES system forms a nano-cage that allows encapsulation of the non-native substrate proteins and provides a physical environment optimized to promote and accelerate protein folding. The chain is Chaperonin GroEL from Vibrio campbellii (strain ATCC BAA-1116).